We begin with the raw amino-acid sequence, 234 residues long: Probable chemoreceptor glutamine deamidase CheD (234 aa).

It belongs to the CheD family.

It carries out the reaction L-glutaminyl-[protein] + H2O = L-glutamyl-[protein] + NH4(+). Probably deamidates glutamine residues to glutamate on methyl-accepting chemotaxis receptors (MCPs), playing an important role in chemotaxis. This chain is Probable chemoreceptor glutamine deamidase CheD, found in Burkholderia mallei (strain NCTC 10247).